A 252-amino-acid chain; its full sequence is Thiazole synthase (252 aa).

Lys-91 (schiff-base intermediate with DXP) is an active-site residue. 1-deoxy-D-xylulose 5-phosphate is bound by residues Gly-152, 179 to 180 (AG), and 201 to 202 (NT).

The protein belongs to the ThiG family. In terms of assembly, homotetramer. Forms heterodimers with either ThiH or ThiS.

Its subcellular location is the cytoplasm. The catalysed reaction is [ThiS sulfur-carrier protein]-C-terminal-Gly-aminoethanethioate + 2-iminoacetate + 1-deoxy-D-xylulose 5-phosphate = [ThiS sulfur-carrier protein]-C-terminal Gly-Gly + 2-[(2R,5Z)-2-carboxy-4-methylthiazol-5(2H)-ylidene]ethyl phosphate + 2 H2O + H(+). It participates in cofactor biosynthesis; thiamine diphosphate biosynthesis. Catalyzes the rearrangement of 1-deoxy-D-xylulose 5-phosphate (DXP) to produce the thiazole phosphate moiety of thiamine. Sulfur is provided by the thiocarboxylate moiety of the carrier protein ThiS. In vitro, sulfur can be provided by H(2)S. The chain is Thiazole synthase from Gluconobacter oxydans (strain 621H) (Gluconobacter suboxydans).